A 299-amino-acid chain; its full sequence is 4-hydroxy-tetrahydrodipicolinate synthase (299 aa).

A pyruvate-binding site is contributed by threonine 44. Residue tyrosine 133 is the Proton donor/acceptor of the active site. Catalysis depends on lysine 162, which acts as the Schiff-base intermediate with substrate. Isoleucine 204 serves as a coordination point for pyruvate.

The protein belongs to the DapA family. As to quaternary structure, homotetramer; dimer of dimers.

It localises to the cytoplasm. It carries out the reaction L-aspartate 4-semialdehyde + pyruvate = (2S,4S)-4-hydroxy-2,3,4,5-tetrahydrodipicolinate + H2O + H(+). The protein operates within amino-acid biosynthesis; L-lysine biosynthesis via DAP pathway; (S)-tetrahydrodipicolinate from L-aspartate: step 3/4. Its function is as follows. Catalyzes the condensation of (S)-aspartate-beta-semialdehyde [(S)-ASA] and pyruvate to 4-hydroxy-tetrahydrodipicolinate (HTPA). The sequence is that of 4-hydroxy-tetrahydrodipicolinate synthase from Thermus thermophilus (strain ATCC 27634 / DSM 579 / HB8).